We begin with the raw amino-acid sequence, 287 residues long: Iron-sulfur cluster carrier protein (287 aa).

Residue 47–54 (GKGGVGKS) coordinates ATP.

This sequence belongs to the Mrp/NBP35 ATP-binding proteins family. Homodimer.

In terms of biological role, binds and transfers iron-sulfur (Fe-S) clusters to target apoproteins. Can hydrolyze ATP. The protein is Iron-sulfur cluster carrier protein of Pseudomonas fragi.